We begin with the raw amino-acid sequence, 201 residues long: MLKEVRPAVVSLLALTMITGLAYPLAVTGLATVLFPYQAQGSLVERGGKVVGSALIGQEFKGDEYFHGRPSATVAPDPADSSKTVSAPYNAANSGGSNLGPTSKALADRLSEDVAKLKAENPAAAIPVDLVTTSGSGLDPDISPEGALFQVPRVAKARGVPEEQIRKLVGASINQPLGGVLGEPRVNVLKLNLALDAAAPR.

A helical membrane pass occupies residues 12–34 (LLALTMITGLAYPLAVTGLATVL). The segment at 73–102 (TVAPDPADSSKTVSAPYNAANSGGSNLGPT) is disordered. A compositionally biased stretch (polar residues) spans 81-101 (SSKTVSAPYNAANSGGSNLGP).

The protein belongs to the KdpC family. The system is composed of three essential subunits: KdpA, KdpB and KdpC.

It is found in the cell inner membrane. In terms of biological role, part of the high-affinity ATP-driven potassium transport (or Kdp) system, which catalyzes the hydrolysis of ATP coupled with the electrogenic transport of potassium into the cytoplasm. This subunit acts as a catalytic chaperone that increases the ATP-binding affinity of the ATP-hydrolyzing subunit KdpB by the formation of a transient KdpB/KdpC/ATP ternary complex. The chain is Potassium-transporting ATPase KdpC subunit from Rhodopseudomonas palustris (strain ATCC BAA-98 / CGA009).